A 376-amino-acid polypeptide reads, in one-letter code: 23S rRNA (uracil(747)-C(5))-methyltransferase RlmC (376 aa).

Residues cysteine 3, cysteine 11, cysteine 14, and cysteine 87 each contribute to the [4Fe-4S] cluster site. Positions 212, 241, 262, and 307 each coordinate S-adenosyl-L-methionine. Cysteine 334 functions as the Nucleophile in the catalytic mechanism.

The protein belongs to the class I-like SAM-binding methyltransferase superfamily. RNA M5U methyltransferase family. RlmC subfamily.

It carries out the reaction uridine(747) in 23S rRNA + S-adenosyl-L-methionine = 5-methyluridine(747) in 23S rRNA + S-adenosyl-L-homocysteine + H(+). Its function is as follows. Catalyzes the formation of 5-methyl-uridine at position 747 (m5U747) in 23S rRNA. This Yersinia pseudotuberculosis serotype O:1b (strain IP 31758) protein is 23S rRNA (uracil(747)-C(5))-methyltransferase RlmC.